Here is a 648-residue protein sequence, read N- to C-terminus: Threonine--tRNA ligase (648 aa).

One can recognise a TGS domain in the interval 1–63 (MAQISLTFPD…HADATIAIHT (63 aa)). Residues 247–544 (DHRKLGREMD…LIENSAGKLP (298 aa)) form a catalytic region. Zn(2+)-binding residues include Cys344, His395, and His521.

The protein belongs to the class-II aminoacyl-tRNA synthetase family. Homodimer. Zn(2+) is required as a cofactor.

Its subcellular location is the cytoplasm. It catalyses the reaction tRNA(Thr) + L-threonine + ATP = L-threonyl-tRNA(Thr) + AMP + diphosphate + H(+). In terms of biological role, catalyzes the attachment of threonine to tRNA(Thr) in a two-step reaction: L-threonine is first activated by ATP to form Thr-AMP and then transferred to the acceptor end of tRNA(Thr). Also edits incorrectly charged L-seryl-tRNA(Thr). In Roseobacter denitrificans (strain ATCC 33942 / OCh 114) (Erythrobacter sp. (strain OCh 114)), this protein is Threonine--tRNA ligase.